We begin with the raw amino-acid sequence, 549 residues long: Eukaryotic translation initiation factor 3 subunit D (549 aa).

The segment at 101 to 130 (QSYQRGRARGQRGRGARGARTPGGMTTLNK) is disordered. A compositionally biased stretch (basic residues) spans 106 to 117 (GRARGQRGRGAR). The segment at 277 to 291 (EFDLLTVNETSVEPP) is RNA gate. The disordered stretch occupies residues 521-549 (ESDASEESGDEQADTPFAPLYSYGNSKRV). Residues 523–533 (DASEESGDEQA) are compositionally biased toward acidic residues.

The protein belongs to the eIF-3 subunit D family. In terms of assembly, component of the eukaryotic translation initiation factor 3 (eIF-3) complex.

The protein localises to the cytoplasm. Functionally, mRNA cap-binding component of the eukaryotic translation initiation factor 3 (eIF-3) complex, which is involved in protein synthesis of a specialized repertoire of mRNAs and, together with other initiation factors, stimulates binding of mRNA and methionyl-tRNAi to the 40S ribosome. The eIF-3 complex specifically targets and initiates translation of a subset of mRNAs involved in cell proliferation. In the eIF-3 complex, eif3d specifically recognizes and binds the 7-methylguanosine cap of a subset of mRNAs. The chain is Eukaryotic translation initiation factor 3 subunit D from Bombyx mori (Silk moth).